The chain runs to 204 residues: MWAVYLQGVLLGAAMILPLGPQNAFVMNQGIRRQYHLMVALLCAVSDMVLISAGIFGGSALLNQSSLLLGAVTCGGVAFLLWFGWGAMKTAFSKNIALTSADVMKQSRWRIIATMLAVTWLNPHVYLDTFVVLGSLGSQFADDARRWFALGTMTASFTWFFALALLAAWLAPWLNTPRVQRVINFFVGMVMWGIALQLARHGWQ.

The next 6 helical transmembrane spans lie at Met1–Pro21, Leu37–Gly57, Leu67–Ala87, Ile111–Val131, Thr154–Leu174, and Val179–Ala199.

It belongs to the LysE/ArgO transporter (TC 2.A.75) family.

The protein resides in the cell inner membrane. The catalysed reaction is L-arginine(in) = L-arginine(out). Its function is as follows. Involved in the export of arginine. Important to control the intracellular level of arginine and the correct balance between arginine and lysine. The sequence is that of Arginine exporter protein ArgO from Pectobacterium atrosepticum (strain SCRI 1043 / ATCC BAA-672) (Erwinia carotovora subsp. atroseptica).